A 471-amino-acid chain; its full sequence is 5-hydroxytryptamine receptor 2A (471 aa).

The Extracellular portion of the chain corresponds to 1 to 80; the sequence is MDILCEENTS…LQEKNWSALL (80 aa). N-linked (GlcNAc...) asparagine glycans are attached at residues asparagine 8, asparagine 38, asparagine 44, asparagine 51, and asparagine 54. A helical transmembrane segment spans residues 81 to 97; it reads TAVVIILTIAGNILVIM. Topologically, residues 98 to 111 are cytoplasmic; sequence AVSLEKKLQNATNY. A helical transmembrane segment spans residues 112 to 137; it reads FLMSLAIADMLLGFLVMPVSMLTILY. Over 138-146 the chain is Extracellular; that stretch reads GYRWPLPSK. Residues 147–171 traverse the membrane as a helical segment; that stretch reads LCAVWIYLDVLFSTASIMHLCAISL. Cysteine 148 and cysteine 227 are disulfide-bonded. Position 155 (aspartate 155) interacts with serotonin. The DRY motif; important for ligand-induced conformation changes signature appears at 172 to 174; the sequence is DRY. Residues 172-191 lie on the Cytoplasmic side of the membrane; it reads DRYVAIQNPIHHSRFNSRTK. A helical membrane pass occupies residues 192–215; sequence AFLKIIAVWTISVGISMPIPVFGL. The Extracellular portion of the chain corresponds to 216-232; it reads QDDSKVFKEGSCLLADD. The chain crosses the membrane as a helical span at residues 233–258; that stretch reads NFVLIGSFVSFFIPLTIMVITYFLTI. At 259 to 322 the chain is on the cytoplasmic side; the sequence is KSLQKEATLC…QSISNEQKAC (64 aa). Phosphoserine is present on serine 280. The chain crosses the membrane as a helical span at residues 323 to 348; the sequence is KVLGIVFFLFVVMWCPFFITNIMAVI. A serotonin-binding site is contributed by asparagine 343. A disulfide bridge links cysteine 349 with cysteine 353. Topologically, residues 349–356 are extracellular; sequence CKESCNED. A helical membrane pass occupies residues 357 to 382; it reads VIGALLNVFVWIGYLSSAVNPLVYTL. Residues 376 to 380 carry the NPxxY motif; important for ligand-induced conformation changes and signaling motif; the sequence is NPLVY. Residues 383–471 lie on the Cytoplasmic side of the membrane; it reads FNKTYRSAFS…DGVNEKVSCV (89 aa). The tract at residues 450 to 471 is disordered; sequence KQHSEDASKDNSDGVNEKVSCV. Positions 451–465 are enriched in basic and acidic residues; it reads QHSEDASKDNSDGVN. The short motif at 469–471 is the PDZ-binding element; the sequence is SCV.

Belongs to the G-protein coupled receptor 1 family. As to quaternary structure, interacts (via C-terminus) with MPDZ and PATJ. May interact (via C-terminus) with MPP3, PRDX6, DLG4, DLG1, CASK, APBA1 and MAGI2. Interacts with GRM2 and DRD2; this may affect signaling.

The protein resides in the cell membrane. Its subcellular location is the cell projection. The protein localises to the dendrite. It localises to the axon. It is found in the cytoplasmic vesicle. The protein resides in the membrane. Its subcellular location is the caveola. The protein localises to the presynapse. With respect to regulation, G-protein coupled receptor activity is regulated by lipids: oleamide increases HTR2A-mediated activity. Functionally, G-protein coupled receptor for 5-hydroxytryptamine (serotonin). Also functions as a receptor for various drugs and psychoactive substances, including mescaline, psilocybin, 1-(2,5-dimethoxy-4-iodophenyl)-2-aminopropane (DOI) and lysergic acid diethylamide (LSD). Ligand binding causes a conformation change that triggers signaling via guanine nucleotide-binding proteins (G proteins) and modulates the activity of downstream effectors. HTR2A is coupled to G(q)/G(11) G alpha proteins and activates phospholipase C-beta, releasing diacylglycerol (DAG) and inositol 1,4,5-trisphosphate (IP3) second messengers that modulate the activity of phosphatidylinositol 3-kinase and promote the release of Ca(2+) ions from intracellular stores, respectively. Beta-arrestin family members inhibit signaling via G proteins and mediate activation of alternative signaling pathways. Affects neural activity, perception, cognition and mood. Plays a role in the regulation of behavior, including responses to anxiogenic situations and psychoactive substances. Plays a role in intestinal smooth muscle contraction, and may play a role in arterial vasoconstriction. In Macaca mulatta (Rhesus macaque), this protein is 5-hydroxytryptamine receptor 2A (HTR2A).